A 527-amino-acid polypeptide reads, in one-letter code: FAD-dependent monooxygenase CTB5 (527 aa).

In terms of domain architecture, FAD-binding PCMH-type spans 78–255 (SDLHPSCIAL…TAVTLKTFGQ (178 aa)).

This sequence belongs to the oxygen-dependent FAD-linked oxidoreductase family.

It participates in mycotoxin biosynthesis. In terms of biological role, FAD-dependent monooxygenase; part of the gene cluster that mediates the biosynthesis of cercosporin, a light-activated, non-host-selective toxin. The perylenequinone chromophore of cercosporin absorbs light energy to attain an electronically-activated triplet state and produces active oxygen species such as the hydroxyl radical, superoxide, hydrogen peroxide or singlet oxygen upon reaction with oxygen molecules. These reactive oxygen species cause damage to various cellular components including lipids, proteins and nucleic acids. The first step of cercosporin biosynthesis is performed by the polyketide synthase CTB1 which catalyzes the formation of nor-toralactone. The starter unit acyltransferase (SAT) domain of CTB1 initiates polyketide extension by the selective utilization of acetyl-CoA, which is elongated to the heptaketide in the beta-ketoacyl synthase (KS) domain by successive condensations with six malonyl units introduced by the malonyl acyltransferase (MAT) domain. The product template (PT) domain catalyzes C4-C9 and C2-C11 aldol cyclizations and dehydrations to a trihydroxynaphthalene, which is thought to be delivered to the thioesterase (TE) domain for product release. The bifunctional enzyme CTB3 then methylates nor-toralactone to toralactone before conducting an unusual oxidative aromatic ring opening. The O-methyltransferase CTB2 further methylates the nascent OH-6 of the CBT3 product, blocking further oxidation at this site before the reductase CTB6 reduces the 2-oxopropyl ketone at position C7, giving naphthalene. The FAD-dependent monooxygenase CTB5 in concert with the multicopper oxidase CTB12 are responsible for homodimerization of naphthalene with CTB7 installing the dioxepine moiety, finally producing cercosporin. The fasciclin domain-containing protein CTB11 might act with CTB5 and CTB12 whereas the roles of CTB9 and CTB10 have still to be elucidated. In Cercospora beticola (Sugarbeet leaf spot fungus), this protein is FAD-dependent monooxygenase CTB5.